The chain runs to 140 residues: 3-hydroxyacyl-[acyl-carrier-protein] dehydratase FabZ (140 aa).

His-47 is an active-site residue.

The protein belongs to the thioester dehydratase family. FabZ subfamily.

The protein localises to the cytoplasm. The enzyme catalyses a (3R)-hydroxyacyl-[ACP] = a (2E)-enoyl-[ACP] + H2O. Functionally, involved in unsaturated fatty acids biosynthesis. Catalyzes the dehydration of short chain beta-hydroxyacyl-ACPs and long chain saturated and unsaturated beta-hydroxyacyl-ACPs. The protein is 3-hydroxyacyl-[acyl-carrier-protein] dehydratase FabZ of Streptococcus pneumoniae serotype 2 (strain D39 / NCTC 7466).